The following is a 174-amino-acid chain: Small ribosomal subunit protein uS5c (174 aa).

One can recognise an S5 DRBM domain in the interval 17–80 (WEERVVQVKR…TDAKKHLVTV (64 aa)).

The protein belongs to the universal ribosomal protein uS5 family. As to quaternary structure, part of the 30S ribosomal subunit. Contacts protein S4.

It localises to the plastid. The protein resides in the chloroplast. Functionally, with S4 and S12 plays an important role in translational accuracy. This chain is Small ribosomal subunit protein uS5c (rps5), found in Pyropia yezoensis (Susabi-nori).